A 230-amino-acid polypeptide reads, in one-letter code: 6-carboxyhexanoate--CoA ligase (230 aa).

The protein belongs to the BioW family. Homodimer. It depends on Mg(2+) as a cofactor.

It catalyses the reaction heptanedioate + ATP + CoA = 6-carboxyhexanoyl-CoA + AMP + diphosphate. It participates in metabolic intermediate metabolism; pimeloyl-CoA biosynthesis; pimeloyl-CoA from pimelate: step 1/1. In terms of biological role, catalyzes the transformation of pimelate into pimeloyl-CoA with concomitant hydrolysis of ATP to AMP. The chain is 6-carboxyhexanoate--CoA ligase from Staphylococcus aureus (strain Mu3 / ATCC 700698).